The sequence spans 329 residues: Cuticle collagen 6 (329 aa).

Triple-helical region stretches follow at residues 142-171 (GAAGPPGPEGPPGNDGKDGRNGNDGKNGRD), 189-212 (GAPGPMGAMGPKGPPGPKGSPGEP), 216-248 (GKSGDDGMAGQPGPIGRPGRDGMKGAPGAAGRL), 253-279 (GPQGAPGKPGPIGPPGPKGNPGPDGQS), and 282-320 (GPPGPPGDSGTPGHEGRAGPNGPAGPPGDNGEKGDCGHC). The interval 146-329 (PPGPEGPPGN…CPPPRTPPGY (184 aa)) is disordered. The segment covering 156 to 173 (DGKDGRNGNDGKNGRDAE) has biased composition (basic and acidic residues). The segment covering 187–199 (PTGAPGPMGAMGP) has biased composition (low complexity). Over residues 200–212 (KGPPGPKGSPGEP) the composition is skewed to pro residues. Residues 251 to 272 (VPGPQGAPGKPGPIGPPGPKGN) are compositionally biased toward pro residues. The span at 273–282 (PGPDGQSYQG) shows a compositional bias: low complexity. A compositionally biased stretch (pro residues) spans 320–329 (CPPPRTPPGY).

The protein belongs to the cuticular collagen family. As to quaternary structure, collagen polypeptide chains are complexed within the cuticle by disulfide bonds and other types of covalent cross-links.

Nematode cuticles are composed largely of collagen-like proteins. The cuticle functions both as an exoskeleton and as a barrier to protect the worm from its environment. In Caenorhabditis elegans, this protein is Cuticle collagen 6.